The chain runs to 419 residues: Tyrosine--tRNA ligase 2 (419 aa).

Y34 lines the L-tyrosine pocket. The short motif at 39–48 (PTGDSMHIGH) is the 'HIGH' region element. Positions 168 and 172 each coordinate L-tyrosine. Positions 230-234 (KFGKS) match the 'KMSKS' region motif. Position 233 (K233) interacts with ATP. The S4 RNA-binding domain maps to 352–418 (KNIVEWLVDL…GKKNYSLVKL (67 aa)).

Belongs to the class-I aminoacyl-tRNA synthetase family. TyrS type 1 subfamily. Homodimer.

The protein localises to the cytoplasm. The enzyme catalyses tRNA(Tyr) + L-tyrosine + ATP = L-tyrosyl-tRNA(Tyr) + AMP + diphosphate + H(+). Functionally, catalyzes the attachment of tyrosine to tRNA(Tyr) in a two-step reaction: tyrosine is first activated by ATP to form Tyr-AMP and then transferred to the acceptor end of tRNA(Tyr). The protein is Tyrosine--tRNA ligase 2 of Bacillus cereus (strain ZK / E33L).